The chain runs to 561 residues: Nucleoprotein (561 aa).

The tract at residues 52–237 (VRKDKRTDSD…ISHEPSALNI (186 aa)) is binding site for the cap structure m7GTP. The disordered stretch occupies residues 336–355 (SKPSAIQPPVRNGGSPDLKQ). 2 residues coordinate Mn(2+): Asp-380 and Glu-382. Zn(2+) contacts are provided by Glu-390, Cys-497, His-500, and Cys-521. Asp-525 contributes to the Mn(2+) binding site.

The protein belongs to the arenaviridae nucleocapsid protein family. As to quaternary structure, homomultimerizes to form the nucleocapsid. Binds to viral genomic RNA. Interacts with glycoprotein G2. Interacts with protein Z; this interaction probably directs the encapsidated genome to budding sites. Interacts with protein L; this interaction does not interfere with Z-L interaction. Interacts with host IKBKE (via Protein kinase domain); the interaction inhibits IKBKE kinase activity.

Its subcellular location is the virion. It is found in the host cytoplasm. Functionally, encapsidates the genome, protecting it from nucleases. The encapsidated genomic RNA is termed the nucleocapsid (NC). Serves as template for viral transcription and replication. The increased presence of protein N in host cell does not seem to trigger the switch from transcription to replication as observed in other negative strain RNA viruses. Through the interaction with host IKBKE, strongly inhibits the phosphorylation and nuclear translocation of host IRF3, a protein involved in interferon activation pathway, leading to the inhibition of interferon-beta and IRF3-dependent promoters activation. Also encodes a functional 3'-5' exoribonuclease that degrades preferentially dsRNA substrates and thereby participates in the suppression of interferon induction. This chain is Nucleoprotein, found in Cavia cutleri (Guinea pig).